Reading from the N-terminus, the 452-residue chain is Tubulin alpha-1 chain (452 aa).

A GTP-binding site is contributed by Gln11. Lys40 is modified (N6-acetyllysine). Residues Glu71, Ser140, Gly144, Thr145, Thr179, Asn206, and Asn228 each contribute to the GTP site. Mg(2+) is bound at residue Glu71. Residue Glu254 is part of the active site. Positions 433–452 (EEVGVDSADAEGEEEEGDEY) are disordered.

This sequence belongs to the tubulin family. As to quaternary structure, dimer of alpha and beta chains. A typical microtubule is a hollow water-filled tube with an outer diameter of 25 nm and an inner diameter of 15 nM. Alpha-beta heterodimers associate head-to-tail to form protofilaments running lengthwise along the microtubule wall with the beta-tubulin subunit facing the microtubule plus end conferring a structural polarity. Microtubules usually have 13 protofilaments but different protofilament numbers can be found in some organisms and specialized cells. The cofactor is Mg(2+). Undergoes a tyrosination/detyrosination cycle, the cyclic removal and re-addition of a C-terminal tyrosine residue by the enzymes tubulin tyrosine carboxypeptidase (TTCP) and tubulin tyrosine ligase (TTL), respectively. In terms of processing, acetylation of alpha chains at Lys-40 stabilizes microtubules and affects affinity and processivity of microtubule motors. This modification has a role in multiple cellular functions, ranging from cell motility, cell cycle progression or cell differentiation to intracellular trafficking and signaling.

It is found in the cytoplasm. It localises to the cytoskeleton. The catalysed reaction is GTP + H2O = GDP + phosphate + H(+). In terms of biological role, tubulin is the major constituent of microtubules, a cylinder consisting of laterally associated linear protofilaments composed of alpha- and beta-tubulin heterodimers. Microtubules grow by the addition of GTP-tubulin dimers to the microtubule end, where a stabilizing cap forms. Below the cap, tubulin dimers are in GDP-bound state, owing to GTPase activity of alpha-tubulin. The polypeptide is Tubulin alpha-1 chain (Paracentrotus lividus (Common sea urchin)).